We begin with the raw amino-acid sequence, 136 residues long: NLP effector protein 13 (136 aa).

The Conserved undecapeptide motif I signature appears at 1–9 (MYSWYFPKD). The Hepta-peptide GHRHDWE motif II signature appears at 16–22 (GHRHDWE).

This sequence belongs to the Necrosis inducing protein (NPP1) family.

The protein resides in the secreted. Its function is as follows. Secreted effector that contributes moderately to virulence during infection by P.capsici. Causes only small yellow areas at 3 days after inoculation of host C.annuum leaves; these areas expand somewhat and became necrotic at 7 days after inoculation. Leads only to chlorotic areas, without necrosis at 7 days after non-host N.benthamiana leaves infection. This chain is NLP effector protein 13, found in Phytophthora capsici.